A 145-amino-acid chain; its full sequence is Superoxide dismutase [Mn/Fe] (145 aa).

His-10 and His-64 together coordinate Fe(3+). Residues His-10 and His-64 each contribute to the Mn(2+) site.

It belongs to the iron/manganese superoxide dismutase family. Requires Mn(2+) as cofactor. Fe(3+) is required as a cofactor.

The catalysed reaction is 2 superoxide + 2 H(+) = H2O2 + O2. Functionally, destroys superoxide anion radicals which are normally produced within the cells and which are toxic to biological systems. Catalyzes the dismutation of superoxide anion radicals into O2 and H2O2 by successive reduction and oxidation of the transition metal ion at the active site. The chain is Superoxide dismutase [Mn/Fe] (sodA) from Streptococcus acidominimus.